A 360-amino-acid chain; its full sequence is Glycerol-1-phosphate dehydrogenase [NAD(P)+] (360 aa).

NAD(+) contacts are provided by residues 108-112 and 130-133; these read GRVID and TAAS. A substrate-binding site is contributed by Asp-135. Ser-139 is an NAD(+) binding site. Residue Asp-182 participates in substrate binding. Asp-182 and His-262 together coordinate Zn(2+). Substrate is bound at residue His-266. His-278 contacts Zn(2+).

This sequence belongs to the glycerol-1-phosphate dehydrogenase family. Zn(2+) serves as cofactor.

It is found in the cytoplasm. It catalyses the reaction sn-glycerol 1-phosphate + NAD(+) = dihydroxyacetone phosphate + NADH + H(+). The enzyme catalyses sn-glycerol 1-phosphate + NADP(+) = dihydroxyacetone phosphate + NADPH + H(+). The protein operates within membrane lipid metabolism; glycerophospholipid metabolism. Its function is as follows. Catalyzes the NAD(P)H-dependent reduction of dihydroxyacetonephosphate (DHAP or glycerone phosphate) to glycerol 1-phosphate (G1P). The G1P thus generated is used as the glycerophosphate backbone of phospholipids in the cellular membranes of Archaea. This chain is Glycerol-1-phosphate dehydrogenase [NAD(P)+], found in Methanocorpusculum labreanum (strain ATCC 43576 / DSM 4855 / Z).